The sequence spans 255 residues: uncharacterized protein (255 aa).

This is an uncharacterized protein from Acanthamoeba polyphaga mimivirus (APMV).